A 175-amino-acid chain; its full sequence is UPF0178 protein GOX1710 (175 aa).

Belongs to the UPF0178 family.

The protein is UPF0178 protein GOX1710 of Gluconobacter oxydans (strain 621H) (Gluconobacter suboxydans).